Reading from the N-terminus, the 605-residue chain is Protein Spindly (605 aa).

Position 1 is an N-acetylmethionine (M1). The stretch at 3-442 forms a coiled coil; it reads TDIVINLRCK…ELKLKYEPEE (440 aa). S513, S515, and S555 each carry phosphoserine. The tract at residues 545–581 is disordered; the sequence is LSERSGNTLNSPRLAAESKLQTEVKEGKETASKLEKE. Positions 564–581 are enriched in basic and acidic residues; that stretch reads LQTEVKEGKETASKLEKE.

Belongs to the Spindly family. In terms of assembly, interacts with KNTC1 and ZW10. These interactions appear weak and may be transient or indirect. Interacts with dynein intermediate chain and dynactin (DCTN1). Interacts with the catalytically active form of USP45. Monoubiquitinated with'Lys-48' linkage. Deubiquitinated by USP45.

It is found in the cytoplasm. The protein localises to the cytoskeleton. Its subcellular location is the microtubule organizing center. It localises to the centrosome. The protein resides in the chromosome. It is found in the centromere. The protein localises to the kinetochore. Its subcellular location is the nucleus. It localises to the spindle pole. Required for the localization of dynein and dynactin to the mitotic kintochore. Dynein is believed to control the initial lateral interaction between the kinetochore and spindle microtubules and to facilitate the subsequent formation of end-on kinetochore-microtubule attachments mediated by the NDC80 complex. Also required for correct spindle orientation. Does not appear to be required for the removal of spindle assembly checkpoint (SAC) proteins from the kinetochore upon bipolar spindle attachment. Acts as an adapter protein linking the dynein motor complex to various cargos and converts dynein from a non-processive to a highly processive motor in the presence of dynactin. Facilitates the interaction between dynein and dynactin and activates dynein processivity (the ability to move along a microtubule for a long distance without falling off the track). Plays a role in cell migration. The polypeptide is Protein Spindly (Macaca fascicularis (Crab-eating macaque)).